Reading from the N-terminus, the 240-residue chain is Phosducin-like protein 2 (240 aa).

One can recognise a Phosducin domain in the interval 38–201 (QQEAMVKPYE…LEWKLSEVGA (164 aa)). A thioredoxin fold region spans residues 89–240 (FGELREISGN…DSSGSDTEAK (152 aa)).

The protein belongs to the phosducin family. As to quaternary structure, interacts with the CCT chaperonin complex and actin. In terms of tissue distribution, testis-specific (at protein level).

It is found in the endoplasmic reticulum. Essential for male fertility, spermiogenesis and acrosome formation. The sequence is that of Phosducin-like protein 2 (Pdcl2) from Mus musculus (Mouse).